We begin with the raw amino-acid sequence, 500 residues long: NAD(P)H-quinone oxidoreductase chain 4, chloroplastic (500 aa).

Helical transmembrane passes span 4–24 (FPWLTILVVLPIFAGSLIFFL), 37–57 (ISICLLEFLLMTYAFCYHFQL), 87–107 (VGSILLTGFITTLATLAAWPV), 113–130 (LFYFLMLAMYSGQIGLFS), 134–154 (LLLFFIMWELELIPVYLLLSM), 167–187 (FILYTAGGSIFFLIGVLGMGL), 211–231 (ILLYFGFLIAYAVKLPIIPLH), 242–262 (HYSTCMLLAGILLKMGAYGLI), 272–292 (AHYLFSPWLVIIGAIQIIYAA), 313–333 (MGFIIIGIGSITNIGLNGAIL), 334–354 (QILSHGFIGATLFFLAGTASD), 386–406 (LALPGMSGFVAELVVFFGLIT), 417–437 (LITFVMAIGMILTPIYLLSML), and 462–482 (LFILICIFLPVIGIGIYPDLV).

This sequence belongs to the complex I subunit 4 family.

It is found in the plastid. The protein localises to the chloroplast thylakoid membrane. The enzyme catalyses a plastoquinone + NADH + (n+1) H(+)(in) = a plastoquinol + NAD(+) + n H(+)(out). It catalyses the reaction a plastoquinone + NADPH + (n+1) H(+)(in) = a plastoquinol + NADP(+) + n H(+)(out). This Agrostis stolonifera (Creeping bentgrass) protein is NAD(P)H-quinone oxidoreductase chain 4, chloroplastic.